The following is a 39-amino-acid chain: Conotoxin Cl14.7 (39 aa).

A propeptide spanning residues M1–Q15 is cleaved from the precursor.

In terms of processing, contains 2 disulfide bonds. In terms of tissue distribution, expressed by the venom duct.

The protein resides in the secreted. This is Conotoxin Cl14.7 from Californiconus californicus (California cone).